Reading from the N-terminus, the 388-residue chain is MTNSPIADLVHHPERVQSPSLVNSKMNGDAKAVTEWTEPGPAAFDFRSDTVTRPTEQMLAAIAATTLQDDDFRQDPTTLGLEAWMAELTGKAAGLFVVSGTMGNQLGVRAHLQSPPHSVLCDARSHLVTHEAGGVASLSGAMVSCVTPVNGRYMTQADLEAHVNRGTLITDCPTRLVVLEIPLGGVILPLDKCRRISEWARAQGIALHLDGARLWEAVAAGAGSLRDYCACFDSVSLCFSKGLGAPIGSVLVGSETLRERARWIRKSIGGGMRQAGVVCAAARVAVEATFLGGLLKRSHARARDIATFWEIHGGRLTYPTETNMVWLDLEAVGWTPERLIRRGAELGLRFMGARLVVHYQIGDEAIGRLQDLMLEILVSGLVDHPRDS.

Lysine 241 carries the post-translational modification N6-(pyridoxal phosphate)lysine.

This sequence belongs to the threonine aldolase family. It depends on pyridoxal 5'-phosphate as a cofactor.

It participates in secondary metabolite biosynthesis; terpenoid biosynthesis. Aldolase; part of the gene cluster that mediates the biosynthesis of viridicatumtoxin, a tetracycline-like fungal meroterpenoid with a unique, fused spirobicyclic ring system. The first step of the pathway is the production of the malonamoyl-CoA starter unit for the polyketide synthase vrtA. The aldolase vrtJ may be involved in the synthesis of the malonamate substrate for malonamoyl-CoA synthetase vrtB. The polyketide synthase vrtA then may utilize the malonamoyl-CoA starter unit, followed by sequential condensation of eight malonyl-CoA units to form the polyketide backbone. The cyclization of the last ring could be mediated by the lactamase-like protein vrtG. The proposed post-PKS tailoring steps are a hydroxylation at C5 catalyzed the cytochrome P450 monooxygenase vrtE, a hydroxylation at C12a catalyzed by VrtH and/or VrtI, and an O-methylation by the O-methyltransferase vrtF. VrtC is then proposed to catalyze the transfer of a geranyl group synthesized by vrtD to the aromatic C ring of the tetracyclic polyketide intermediate of viridicatumtoxin to yield previridicatumtoxin. Finally, the cytochrome P450 monooxygenase vrtK catalyzes the spirocyclization of the geranyl moiety of previridicatumtoxin to afford viridicatumtoxin. This chain is Aldolase vrtJ, found in Penicillium aethiopicum.